Here is a 316-residue protein sequence, read N- to C-terminus: Apolipoprotein E (316 aa).

The signal sequence occupies residues 1–18 (MKALWAVLVVTLLAGCLA). 8 tandem repeats follow at residues 76–97 (VLME…EQMG), 98–119 (PMAE…SRLG), 120–141 (ADME…TMLG), 142–163 (QSTE…KRLM), 164–185 (RDAE…EGAE), 186–207 (RGVG…QRTA), 208–229 (NLGA…ARIR), and 230–251 (GRLE…EQME). The segment at 76 to 251 (VLMEDTMTEL…RLEEVREQME (176 aa)) is 8 X 22 AA approximate tandem repeats. Methionine sulfoxide is present on Met139. The residue at position 143 (Ser143) is a Phosphoserine. An LDL and other lipoprotein receptors binding region spans residues 154–164 (HLRKLRKRLMR). Residue 158–161 (LRKR) participates in heparin binding. The tract at residues 206-286 (TANLGAGAAQ…GWFEPLVEDM (81 aa)) is lipid-binding and lipoprotein association. 225 to 232 (GARIRGRL) provides a ligand contact to heparin. The homooligomerization stretch occupies residues 262 to 316 (QQMRLQAEIFQTRLKGWFEPLVEDMQRQWANLMEKIQASVATNPIPPSSVPQESQ). Residues 274–286 (RLKGWFEPLVEDM) form a specificity for association with VLDL region.

This sequence belongs to the apolipoprotein A1/A4/E family. In terms of assembly, homotetramer. May interact with ABCA1; functionally associated with ABCA1 in the biogenesis of HDLs. May interact with APP/A4 amyloid-beta peptide; the interaction is extremely stable in vitro but its physiological significance is unclear. May interact with MAPT. May interact with MAP2. In the cerebrospinal fluid, interacts with secreted SORL1. Interacts with PMEL; this allows the loading of PMEL luminal fragment on ILVs to induce fibril nucleation. Post-translationally, APOE exists as multiple glycosylated and sialylated glycoforms within cells and in plasma. The extent of glycosylation and sialylation are tissue and context specific. Glycated in plasma VLDL. In terms of processing, phosphorylated by FAM20C in the extracellular medium.

The protein resides in the secreted. It localises to the extracellular space. Its subcellular location is the extracellular matrix. It is found in the extracellular vesicle. The protein localises to the endosome. The protein resides in the multivesicular body. Functionally, APOE is an apolipoprotein, a protein associating with lipid particles, that mainly functions in lipoprotein-mediated lipid transport between organs via the plasma and interstitial fluids. APOE is a core component of plasma lipoproteins and is involved in their production, conversion and clearance. Apolipoproteins are amphipathic molecules that interact both with lipids of the lipoprotein particle core and the aqueous environment of the plasma. As such, APOE associates with chylomicrons, chylomicron remnants, very low density lipoproteins (VLDL) and intermediate density lipoproteins (IDL) but shows a preferential binding to high-density lipoproteins (HDL). It also binds a wide range of cellular receptors including the LDL receptor/LDLR, the LDL receptor-related proteins LRP1, LRP2 and LRP8 and the very low-density lipoprotein receptor/VLDLR that mediate the cellular uptake of the APOE-containing lipoprotein particles. Finally, APOE also has a heparin-binding activity and binds heparan-sulfate proteoglycans on the surface of cells, a property that supports the capture and the receptor-mediated uptake of APOE-containing lipoproteins by cells. A main function of APOE is to mediate lipoprotein clearance through the uptake of chylomicrons, VLDLs, and HDLs by hepatocytes. APOE is also involved in the biosynthesis by the liver of VLDLs as well as their uptake by peripheral tissues ensuring the delivery of triglycerides and energy storage in muscle, heart and adipose tissues. By participating in the lipoprotein-mediated distribution of lipids among tissues, APOE plays a critical role in plasma and tissues lipid homeostasis. APOE is also involved in two steps of reverse cholesterol transport, the HDLs-mediated transport of cholesterol from peripheral tissues to the liver, and thereby plays an important role in cholesterol homeostasis. First, it is functionally associated with ABCA1 in the biogenesis of HDLs in tissues. Second, it is enriched in circulating HDLs and mediates their uptake by hepatocytes. APOE also plays an important role in lipid transport in the central nervous system, regulating neuron survival and sprouting. The sequence is that of Apolipoprotein E (APOE) from Microtus ochrogaster (Prairie vole).